Reading from the N-terminus, the 492-residue chain is Ketol-acid reductoisomerase (NADP(+)) (492 aa).

The 195-residue stretch at 14-208 (LDQLGKCRFM…GGHRAGVLQS (195 aa)) folds into the KARI N-terminal Rossmann domain. NADP(+) contacts are provided by residues 45-48 (CGAQ), arginine 68, arginine 76, serine 78, and 108-110 (DKQ). Histidine 132 is a catalytic residue. Glycine 158 lines the NADP(+) pocket. 2 consecutive KARI C-terminal knotted domains span residues 209–344 (SFVA…NAPQ) and 345–485 (FDGK…MKDM). Positions 217, 221, 389, and 393 each coordinate Mg(2+). Serine 414 contributes to the substrate binding site.

This sequence belongs to the ketol-acid reductoisomerase family. It depends on Mg(2+) as a cofactor.

The catalysed reaction is (2R)-2,3-dihydroxy-3-methylbutanoate + NADP(+) = (2S)-2-acetolactate + NADPH + H(+). It catalyses the reaction (2R,3R)-2,3-dihydroxy-3-methylpentanoate + NADP(+) = (S)-2-ethyl-2-hydroxy-3-oxobutanoate + NADPH + H(+). Its pathway is amino-acid biosynthesis; L-isoleucine biosynthesis; L-isoleucine from 2-oxobutanoate: step 2/4. It functions in the pathway amino-acid biosynthesis; L-valine biosynthesis; L-valine from pyruvate: step 2/4. Involved in the biosynthesis of branched-chain amino acids (BCAA). Catalyzes an alkyl-migration followed by a ketol-acid reduction of (S)-2-acetolactate (S2AL) to yield (R)-2,3-dihydroxy-isovalerate. In the isomerase reaction, S2AL is rearranged via a Mg-dependent methyl migration to produce 3-hydroxy-3-methyl-2-ketobutyrate (HMKB). In the reductase reaction, this 2-ketoacid undergoes a metal-dependent reduction by NADPH to yield (R)-2,3-dihydroxy-isovalerate. This chain is Ketol-acid reductoisomerase (NADP(+)), found in Pectobacterium atrosepticum (strain SCRI 1043 / ATCC BAA-672) (Erwinia carotovora subsp. atroseptica).